We begin with the raw amino-acid sequence, 289 residues long: D-alanine aminotransferase (289 aa).

Tyr-31 contacts substrate. Arg-50 serves as a coordination point for pyridoxal 5'-phosphate. Substrate-binding residues include Arg-99 and His-101. The active-site Proton acceptor is the Lys-147. Lys-147 is subject to N6-(pyridoxal phosphate)lysine. Glu-179 contributes to the pyridoxal 5'-phosphate binding site.

Belongs to the class-IV pyridoxal-phosphate-dependent aminotransferase family. As to quaternary structure, homodimer. Pyridoxal 5'-phosphate serves as cofactor.

It carries out the reaction D-alanine + 2-oxoglutarate = D-glutamate + pyruvate. Its function is as follows. Acts on the D-isomers of alanine, leucine, aspartate, glutamate, aminobutyrate, norvaline and asparagine. The enzyme transfers an amino group from a substrate D-amino acid to the pyridoxal phosphate cofactor to form pyridoxamine and an alpha-keto acid in the first half-reaction. The second half-reaction is the reverse of the first, transferring the amino group from the pyridoxamine to a second alpha-keto acid to form the product D-amino acid via a ping-pong mechanism. This is an important process in the formation of D-alanine and D-glutamate, which are essential bacterial cell wall components. This is D-alanine aminotransferase (dat) from Listeria monocytogenes serotype 4b (strain F2365).